The sequence spans 353 residues: Photosystem II D2 protein (353 aa).

At Thr2 the chain carries N-acetylthreonine. Thr2 carries the post-translational modification Phosphothreonine. The helical transmembrane segment at 41-61 threads the bilayer; it reads CAYFAVGGWFTGTTFVTSWYT. His118 contacts chlorophyll a. Residues 125-141 form a helical membrane-spanning segment; it reads GFMLRQFELARSVQLRP. Residues Gln130 and Asn143 each coordinate pheophytin a. A helical membrane pass occupies residues 153 to 166; that stretch reads VFVSVFLIYPLGQS. Position 198 (His198) interacts with chlorophyll a. The helical transmembrane segment at 208-228 threads the bilayer; sequence AALLCAIHGATVENTLFEDGD. A plastoquinone-binding residues include His215 and Phe262. Residue His215 coordinates Fe cation. Position 269 (His269) interacts with Fe cation. A helical transmembrane segment spans residues 279–295; it reads GLWMSALGVVGLALNLR.

Belongs to the reaction center PufL/M/PsbA/D family. As to quaternary structure, PSII is composed of 1 copy each of membrane proteins PsbA, PsbB, PsbC, PsbD, PsbE, PsbF, PsbH, PsbI, PsbJ, PsbK, PsbL, PsbM, PsbT, PsbX, PsbY, PsbZ, Psb30/Ycf12, at least 3 peripheral proteins of the oxygen-evolving complex and a large number of cofactors. It forms dimeric complexes. Requires The D1/D2 heterodimer binds P680, chlorophylls that are the primary electron donor of PSII, and subsequent electron acceptors. It shares a non-heme iron and each subunit binds pheophytin, quinone, additional chlorophylls, carotenoids and lipids. There is also a Cl(-1) ion associated with D1 and D2, which is required for oxygen evolution. The PSII complex binds additional chlorophylls, carotenoids and specific lipids. as cofactor.

Its subcellular location is the plastid. It localises to the chloroplast thylakoid membrane. The catalysed reaction is 2 a plastoquinone + 4 hnu + 2 H2O = 2 a plastoquinol + O2. Photosystem II (PSII) is a light-driven water:plastoquinone oxidoreductase that uses light energy to abstract electrons from H(2)O, generating O(2) and a proton gradient subsequently used for ATP formation. It consists of a core antenna complex that captures photons, and an electron transfer chain that converts photonic excitation into a charge separation. The D1/D2 (PsbA/PsbD) reaction center heterodimer binds P680, the primary electron donor of PSII as well as several subsequent electron acceptors. D2 is needed for assembly of a stable PSII complex. This chain is Photosystem II D2 protein, found in Solanum bulbocastanum (Wild potato).